The following is a 113-amino-acid chain: Endoribonuclease SymE (113 aa).

Positions 29-74 constitute a SpoVT-AbrB domain; that stretch reads SRYPDYSRIPAITLKGQWLEAAGFATGTAVVVKVMEGCIVLTAQPA.

It belongs to the SymE family.

It localises to the cytoplasm. Functionally, involved in the degradation and recycling of damaged RNA. It is itself a target for degradation by the ATP-dependent protease Lon. The polypeptide is Endoribonuclease SymE (Escherichia coli (strain ATCC 8739 / DSM 1576 / NBRC 3972 / NCIMB 8545 / WDCM 00012 / Crooks)).